Reading from the N-terminus, the 722-residue chain is Dynein axonemal intermediate chain 7 (722 aa).

A compositionally biased stretch (basic residues) spans 1–15; that stretch reads MGPKAKKSGSKKKKV. The segment at 1–20 is disordered; it reads MGPKAKKSGSKKKKVTKAER.

It belongs to the DNAI7 family. In terms of assembly, part of the multisubunit axonemal dynein complex formed at least of two heavy chains and a number of intermediate and light chains. Associates with tubulin. Interacts with microtubule. Post-translationally, ubiquitinated. Ubiquitination leads to its degradation through the 26S proteasome. Ubiquitin-proteasome-mediated DNAI7 degradation occurs in mitosis.

The protein localises to the cell projection. It localises to the cilium. Its subcellular location is the cytoplasm. Its function is as follows. Via its association with the multisubunit axonemal dynein complex, is potentially involved in the regulation of cilia function. May act as a cell cycle regulator. In Macaca fascicularis (Crab-eating macaque), this protein is Dynein axonemal intermediate chain 7.